We begin with the raw amino-acid sequence, 62 residues long: ATP synthase subunit J, mitochondrial (62 aa).

The chain crosses the membrane as a helical span at residues 13-32 (IVKPLWPYAVGGVITFFLFA).

F-type ATP synthases have 2 components, the catalytic core F(1) and the membrane-embedded component F(0), linked together by a central stalk and a peripheral stalk. The central stalk, also called rotor shaft, is often seen as part of F(1). The peripheral stalk is seen as part of F(0). F(0) contains the membrane channel next to the rotor. F-type ATP synthases form dimers but each monomer functions independently in ATP generation. The dimer consists of 17 different polypeptides: ATP1 (subunit alpha, 3 molecules per monomer, part of F(1)), ATP2 (subunit beta, 3 copies per monomer, part of F(1)), ATP3 (subunit gamma, part of the central stalk), ATP4 (subunit b, part of the peripheral stalk), ATP5/OSCP (subunit 5/OSCP, part of the peripheral stalk), ATP6 (subunit a, part of the peripheral stalk), ATP7 (subunit d, part of the peripheral stalk), ATP8 (subunit 8, part of the peripheral stalk), OLI1 (subunit c, part of the rotor, 10 molecules per monomer), ATP14 (subunit h, part of the peripheral stalk), ATP15 (subunit epsilon, part of the central stalk), ATP16 (subunit delta, part of the central stalk), ATP17 (subunit f, part of the peripheral stalk), ATP18 (subunit i/j, part of the peripheral stalk), ATP19 (subunit k, dimer-specific, at interface between monomers), ATP20 (subunit g, at interface between monomers), TIM11 (subunit e, at interface between monomers).

Its subcellular location is the mitochondrion inner membrane. In terms of biological role, mitochondrial membrane ATP synthase (F(1)F(0) ATP synthase or Complex V) produces ATP from ADP in the presence of a proton gradient across the membrane which is generated by electron transport complexes of the respiratory chain. F-type ATP synthases consist of two structural domains, F(1) - containing the extramembraneous catalytic core, and F(0) - containing the membrane proton channel, linked together by a central stalk and a peripheral stalk. During catalysis, ATP synthesis in the catalytic domain of F(1) is coupled via a rotary mechanism of the central stalk subunits to proton translocation. Part of the complex F(0) domain. Minor subunit located with subunit a/ATP6 in the membrane. This Yarrowia lipolytica (strain CLIB 122 / E 150) (Yeast) protein is ATP synthase subunit J, mitochondrial.